A 95-amino-acid polypeptide reads, in one-letter code: Integration host factor subunit beta (95 aa).

It belongs to the bacterial histone-like protein family. Heterodimer of an alpha and a beta chain.

This protein is one of the two subunits of integration host factor, a specific DNA-binding protein that functions in genetic recombination as well as in transcriptional and translational control. This chain is Integration host factor subunit beta, found in Shewanella sp. (strain ANA-3).